Reading from the N-terminus, the 329-residue chain is GTP 3',8-cyclase (329 aa).

Residues 8-234 (AFARKFYYLR…QLRQRSDGPA (227 aa)) form the Radical SAM core domain. Arginine 17 contributes to the GTP binding site. [4Fe-4S] cluster contacts are provided by cysteine 24 and cysteine 28. Tyrosine 30 contacts S-adenosyl-L-methionine. Cysteine 31 contributes to the [4Fe-4S] cluster binding site. Residue arginine 68 coordinates GTP. Residue glycine 72 coordinates S-adenosyl-L-methionine. Threonine 99 is a GTP binding site. Serine 123 lines the S-adenosyl-L-methionine pocket. A GTP-binding site is contributed by lysine 160. Methionine 194 contacts S-adenosyl-L-methionine. Residues cysteine 257 and cysteine 260 each contribute to the [4Fe-4S] cluster site. 262-264 (RLR) is a binding site for GTP. [4Fe-4S] cluster is bound at residue cysteine 274.

This sequence belongs to the radical SAM superfamily. MoaA family. As to quaternary structure, monomer and homodimer. [4Fe-4S] cluster is required as a cofactor.

The enzyme catalyses GTP + AH2 + S-adenosyl-L-methionine = (8S)-3',8-cyclo-7,8-dihydroguanosine 5'-triphosphate + 5'-deoxyadenosine + L-methionine + A + H(+). The protein operates within cofactor biosynthesis; molybdopterin biosynthesis. Functionally, catalyzes the cyclization of GTP to (8S)-3',8-cyclo-7,8-dihydroguanosine 5'-triphosphate. The sequence is that of GTP 3',8-cyclase from Shigella sonnei (strain Ss046).